The following is a 125-amino-acid chain: Phosphoribosyl-AMP cyclohydrolase (125 aa).

D74 contributes to the Mg(2+) binding site. C75 provides a ligand contact to Zn(2+). Mg(2+)-binding residues include D76 and D78. The Zn(2+) site is built by C92 and C99.

This sequence belongs to the PRA-CH family. Homodimer. Mg(2+) is required as a cofactor. The cofactor is Zn(2+).

The protein resides in the cytoplasm. It catalyses the reaction 1-(5-phospho-beta-D-ribosyl)-5'-AMP + H2O = 1-(5-phospho-beta-D-ribosyl)-5-[(5-phospho-beta-D-ribosylamino)methylideneamino]imidazole-4-carboxamide. It participates in amino-acid biosynthesis; L-histidine biosynthesis; L-histidine from 5-phospho-alpha-D-ribose 1-diphosphate: step 3/9. Catalyzes the hydrolysis of the adenine ring of phosphoribosyl-AMP. This Citrifermentans bemidjiense (strain ATCC BAA-1014 / DSM 16622 / JCM 12645 / Bem) (Geobacter bemidjiensis) protein is Phosphoribosyl-AMP cyclohydrolase.